We begin with the raw amino-acid sequence, 137 residues long: Peptide methionine sulfoxide reductase MsrB (137 aa).

The MsrB domain occupies 7-129 (PGELKNGLSE…NSASLSFTDE (123 aa)). The Zn(2+) site is built by Cys46, Cys49, Cys95, and Cys98. Cys118 acts as the Nucleophile in catalysis.

Belongs to the MsrB Met sulfoxide reductase family. The cofactor is Zn(2+).

The enzyme catalyses L-methionyl-[protein] + [thioredoxin]-disulfide + H2O = L-methionyl-(R)-S-oxide-[protein] + [thioredoxin]-dithiol. This Klebsiella pneumoniae (strain 342) protein is Peptide methionine sulfoxide reductase MsrB.